The chain runs to 176 residues: Telomerase RNA component interacting RNase (176 aa).

Residues 1 to 12 (MAARGRRAEPQG) show a composition bias toward basic and acidic residues. The tract at residues 1–121 (MAARGRRAEP…TLSFVGKRRG (121 aa)) is disordered. A compositionally biased stretch (low complexity) spans 45-56 (SGAGSSPVSGGV). A compositionally biased stretch (basic and acidic residues) spans 68-83 (LFKRKMEEEQRQRQEE). Over residues 90-101 (RPDQSAAAAGPG) the composition is skewed to low complexity. Residue Lys-146 is modified to N6-acetyllysine.

In terms of assembly, part of the telomerase RNA 3' end complex which contains about 488 proteins.

Zn(2+) inhibits the RNase activity while Mg(2+), Ca(2+), Mn(2+), K(+), Na(+), EDTA and EGTA show little effect on the exoribonuclease activity. Functionally, exoribonuclease that is part of the telomerase RNA 3' end processing complex and which has the ability to cleave all four unpaired RNA nucleotides from the 5' end or 3' end with higher efficiency for purine bases. This chain is Telomerase RNA component interacting RNase, found in Homo sapiens (Human).